The primary structure comprises 38 residues: Very early lactation protein (38 aa).

Homodimer. In terms of processing, O-glycosylated. Contains sialic acid residues. In terms of tissue distribution, found in the whey fraction of milk (at protein level).

Its subcellular location is the secreted. The polypeptide is Very early lactation protein (Trichosurus vulpecula (Brush-tailed possum)).